The chain runs to 124 residues: Putative iron-sulfur cluster insertion protein ErpA (124 aa).

Cysteine 52, cysteine 116, and cysteine 118 together coordinate iron-sulfur cluster.

Belongs to the HesB/IscA family. As to quaternary structure, homodimer. Iron-sulfur cluster serves as cofactor.

In terms of biological role, required for insertion of 4Fe-4S clusters. In Ralstonia pickettii (strain 12J), this protein is Putative iron-sulfur cluster insertion protein ErpA.